The sequence spans 207 residues: Large ribosomal subunit protein uL4 (207 aa).

Residues 45–78 (RQGTHAVKNRSARRGGGRKPWRQKGTGRARQGSI) form a disordered region. The span at 51–71 (VKNRSARRGGGRKPWRQKGTG) shows a compositional bias: basic residues.

The protein belongs to the universal ribosomal protein uL4 family. As to quaternary structure, part of the 50S ribosomal subunit.

In terms of biological role, one of the primary rRNA binding proteins, this protein initially binds near the 5'-end of the 23S rRNA. It is important during the early stages of 50S assembly. It makes multiple contacts with different domains of the 23S rRNA in the assembled 50S subunit and ribosome. Forms part of the polypeptide exit tunnel. This is Large ribosomal subunit protein uL4 from Lactiplantibacillus plantarum (strain ATCC BAA-793 / NCIMB 8826 / WCFS1) (Lactobacillus plantarum).